The chain runs to 1395 residues: uncharacterized protein (1395 aa).

Ala-89–Ser-96 lines the ATP pocket. 2 disordered regions span residues Glu-146 to Pro-166 and Ser-205 to Arg-391. Composition is skewed to low complexity over residues Gly-155–Pro-166 and Ser-205–Pro-222. Over residues Glu-230 to Ala-269 the composition is skewed to basic and acidic residues. The segment covering Ser-287–Gly-301 has biased composition (low complexity). Positions Val-313–Arg-328 are enriched in basic residues. Basic and acidic residues predominate over residues Lys-337–Ile-346. Residues Gly-349–Ser-358 show a composition bias toward low complexity. The span at Pro-369–Arg-391 shows a compositional bias: basic and acidic residues. 2 positions are modified to phosphoserine: Ser-814 and Ser-1080. The disordered stretch occupies residues Pro-1110–Glu-1132. Ser-1194 and Ser-1338 each carry phosphoserine. Positions Thr-1346–Arg-1359 are enriched in basic and acidic residues. The disordered stretch occupies residues Thr-1346–Leu-1395.

This is an uncharacterized protein from Homo sapiens (Human).